We begin with the raw amino-acid sequence, 174 residues long: Alpha-crystallin B chain (174 aa).

Residue M1 is modified to N-acetylmethionine. One can recognise a sHSP domain in the interval R55–E163. 4 residues coordinate Zn(2+): H82, H103, E105, and H110. The interval R148 to K174 is disordered. Basic and acidic residues predominate over residues K149–P166.

Belongs to the small heat shock protein (HSP20) family. Heteromer composed of three CRYAA and one CRYAB subunits. Aggregates with homologous proteins, including the small heat shock protein HSPB1, to form large heteromeric complexes. Inter-subunit bridging via zinc ions enhances stability, which is crucial as there is no protein turn over in the lens. As to expression, lens as well as other tissues.

Functionally, may contribute to the transparency and refractive index of the lens. This is Alpha-crystallin B chain (CRYAB) from Gallus gallus (Chicken).